Reading from the N-terminus, the 302-residue chain is 33 kDa chaperonin (302 aa).

Intrachain disulfides connect cysteine 247-cysteine 249 and cysteine 280-cysteine 283.

This sequence belongs to the HSP33 family. In terms of processing, under oxidizing conditions two disulfide bonds are formed involving the reactive cysteines. Under reducing conditions zinc is bound to the reactive cysteines and the protein is inactive.

The protein resides in the cytoplasm. Functionally, redox regulated molecular chaperone. Protects both thermally unfolding and oxidatively damaged proteins from irreversible aggregation. Plays an important role in the bacterial defense system toward oxidative stress. This Prochlorococcus marinus (strain AS9601) protein is 33 kDa chaperonin.